Here is a 425-residue protein sequence, read N- to C-terminus: 5-methylthioadenosine/S-adenosylhomocysteine deaminase (425 aa).

2 residues coordinate Zn(2+): histidine 63 and histidine 65. The substrate site is built by glutamate 92 and histidine 184. Histidine 211 contacts Zn(2+). Substrate is bound by residues glutamate 214 and aspartate 299. Aspartate 299 lines the Zn(2+) pocket.

Belongs to the metallo-dependent hydrolases superfamily. MTA/SAH deaminase family. The cofactor is Zn(2+).

It catalyses the reaction S-adenosyl-L-homocysteine + H2O + H(+) = S-inosyl-L-homocysteine + NH4(+). The catalysed reaction is S-methyl-5'-thioadenosine + H2O + H(+) = S-methyl-5'-thioinosine + NH4(+). Its function is as follows. Catalyzes the deamination of 5-methylthioadenosine and S-adenosyl-L-homocysteine into 5-methylthioinosine and S-inosyl-L-homocysteine, respectively. Is also able to deaminate adenosine. The chain is 5-methylthioadenosine/S-adenosylhomocysteine deaminase from Pyrococcus abyssi (strain GE5 / Orsay).